The chain runs to 65 residues: Small, acid-soluble spore protein Tlp (65 aa).

This sequence belongs to the Tlp family.

The protein resides in the spore core. This chain is Small, acid-soluble spore protein Tlp, found in Bacillus anthracis (strain A0248).